Reading from the N-terminus, the 160-residue chain is Ribosomal RNA large subunit methyltransferase H (160 aa).

S-adenosyl-L-methionine contacts are provided by L76 and G108.

Belongs to the RNA methyltransferase RlmH family. In terms of assembly, homodimer.

The protein localises to the cytoplasm. It carries out the reaction pseudouridine(1915) in 23S rRNA + S-adenosyl-L-methionine = N(3)-methylpseudouridine(1915) in 23S rRNA + S-adenosyl-L-homocysteine + H(+). Its function is as follows. Specifically methylates the pseudouridine at position 1915 (m3Psi1915) in 23S rRNA. In Nitrobacter winogradskyi (strain ATCC 25391 / DSM 10237 / CIP 104748 / NCIMB 11846 / Nb-255), this protein is Ribosomal RNA large subunit methyltransferase H.